The chain runs to 161 residues: Allophycocyanin alpha chain (161 aa).

Asn-71 carries the post-translational modification N4-methylasparagine. Residue Cys-81 participates in (2R,3E)-phycocyanobilin binding.

Belongs to the phycobiliprotein family. As to quaternary structure, heterodimer of an alpha and a beta chain. Post-translationally, contains one covalently linked phycocyanobilin chromophore.

It localises to the plastid. Its subcellular location is the cyanelle thylakoid membrane. Light-harvesting photosynthetic bile pigment-protein from the phycobiliprotein complex. Allophycocyanin has a maximum absorption at approximately 650 nanometers. This chain is Allophycocyanin alpha chain (apcA), found in Cyanophora paradoxa.